The primary structure comprises 789 residues: Transducer protein Htr6 (789 aa).

Transmembrane regions (helical) follow at residues 29-49 and 294-314; these read FAVA…FAFQ and TVTV…IALG. 2 consecutive HAMP domains span residues 315–367 and 409–462; these read RHTV…DRIQ and ERLQ…ATIA. Positions 481–717 constitute a Methyl-accepting transducer domain; that stretch reads GAEEIETTSQ…SVVRRVDDVA (237 aa). The disordered stretch occupies residues 763–789; sequence NQFETRADADEPDADTTVDASADDTGD. The span at 772–789 shows a compositional bias: acidic residues; the sequence is DEPDADTTVDASADDTGD.

This sequence belongs to the methyl-accepting chemotaxis (MCP) protein family. Methylated by CheR.

The protein localises to the cell membrane. Functionally, potentially involved in chemo- or phototactic signal transduction. The polypeptide is Transducer protein Htr6 (htr6) (Halobacterium salinarum (strain ATCC 29341 / DSM 671 / R1)).